The chain runs to 860 residues: SH2 domain-containing protein 3C (860 aa).

Phosphoserine is present on serine 22. 2 disordered regions span residues 51–117 (EATQ…PPGL) and 130–180 (PLED…PEAG). Basic and acidic residues predominate over residues 162 to 175 (ERPPRDVHSERAAG). Residues 220 to 319 (WYHGRIPREV…QSGAIIYCPV (100 aa)) enclose the SH2 domain. Tyrosine 278 and tyrosine 283 each carry phosphotyrosine. A disordered region spans residues 335-537 (GQGSSKPASP…LSENGAPEGD (203 aa)). Residue serine 359 is modified to Phosphoserine. 3 stretches are compositionally biased toward low complexity: residues 405-420 (SPMSPISESPSSPAYS), 427-443 (AAPAAPSATALPASPVA), and 479-490 (SPSPSLSSYSDP). At serine 440 the chain carries Phosphoserine. In terms of domain architecture, Ras-GEF spans 586-854 (DARTLARHVT…TALSHKLEPA (269 aa)). Residue tyrosine 793 is modified to Phosphotyrosine.

Component of a complex comprised of SH2D3C, BCAR1/CAS, and CRK. Within the complex, interacts with CRK and (via C-terminus) with BCAR1/CAS (via C-terminus). Interacts with NEDD9/HEF1. Interacts with EPHB2. As to quaternary structure, interacts with NEDD9/HEF1. Interacts with BCAR1/CAS. Interacts with PTK2B. In terms of assembly, interacts (via C-terminus) with BCAR1/CAS (via C-terminus). Interacts with IGF1. Post-translationally, phosphorylated by MAPK/ERK upon T-cell receptor stimulation in T-cells. Ubiquitously expressed.

Its subcellular location is the cytoplasm. The protein localises to the cell membrane. The protein resides in the cell projection. It is found in the axon. It localises to the ruffle membrane. Functionally, acts as an adapter protein that mediates cell signaling pathways involved in cellular functions such as cell adhesion and migration, tissue organization, and the regulation of the immune response. Plays a role in integrin-mediated cell adhesion through BCAR1-CRK-RAPGEF1 signaling and activation of the small GTPase RAP1. Promotes cell migration and invasion through the extracellular matrix. Required for marginal zone B-cell development and thymus-independent type 2 immune responses. Mediates migration and adhesion of B cells in the splenic marginal zone via promoting hyperphosphorylation of NEDD9/CASL. Plays a role in CXCL13-induced chemotaxis of B-cells. Plays a role in the migration of olfactory sensory neurons (OSNs) into the forebrain and the innervation of the olfactory bulb by the OSN axons during development. Required for the efficient tyrosine phosphorylation of BCAR1 in OSN axons. Important regulator of chemokine-induced, integrin-mediated T lymphocyte adhesion and migration, acting upstream of RAP1. Required for tissue-specific adhesion of T lymphocytes to peripheral tissues. Required for basal and CXCL2 stimulated serine-threonine phosphorylation of NEDD9. May be involved in the regulation of T-cell receptor-mediated IL2 production through the activation of the JNK pathway in T-cells. In terms of biological role, may be involved in the BCAR1/CAS-mediated JNK activation pathway. The protein is SH2 domain-containing protein 3C (SH2D3C) of Homo sapiens (Human).